We begin with the raw amino-acid sequence, 519 residues long: F-box-like/WD repeat-containing protein TBL1XR1-A (519 aa).

In terms of domain architecture, LisH spans S4–Q36. Residues G41 to A86 form the F-box-like domain. Residues A115–E139 are compositionally biased toward low complexity. The tract at residues A115–A147 is disordered. 8 WD repeats span residues G172–S211, P228–L267, Q269–Q308, F311–T349, G352–D391, A394–T442, K445–S484, and R486–K519.

It belongs to the WD repeat EBI family. As to quaternary structure, interacts with heterodimers of rxra and thrb, and this interaction is abrogated by thyroid hormone binding to thrb. Interacts with ncor1.

It is found in the nucleus. Functionally, F-box-like protein which acts as an integral component of the N-CoR transcriptional corepressor complex. Probably regulates transcription activation mediated by nuclear receptors. May mediate the recruitment of the 19S proteasome complex, leading to the subsequent proteasomal degradation of the N-CoR complex, thereby allowing cofactor exchange and transcription activation. The protein is F-box-like/WD repeat-containing protein TBL1XR1-A (tbl1xr1-a) of Xenopus laevis (African clawed frog).